Consider the following 376-residue polypeptide: Endo-1,4-beta-xylanase A (376 aa).

The signal sequence occupies residues 1 to 18 (MHLASSLFLLATLPFGFA). The GH10 domain occupies 55-355 (QRERAGLEDK…HPAYYGVVEA (301 aa)). The N-linked (GlcNAc...) asparagine glycan is linked to asparagine 100. Glutamate 170 acts as the Proton donor in catalysis. The Nucleophile role is filled by glutamate 277. Asparagine 358 carries an N-linked (GlcNAc...) asparagine glycan.

It belongs to the glycosyl hydrolase 10 (cellulase F) family.

The protein resides in the secreted. The enzyme catalyses Endohydrolysis of (1-&gt;4)-beta-D-xylosidic linkages in xylans.. It functions in the pathway glycan degradation; xylan degradation. With respect to regulation, partial inhibition of activity is detected in the presence of Ag(+), Cu2(+) and SDS. Like most fungal xylanases, activity is completely inhibited by Hg(2+) since Hg(2+) could interact with tryptophan residues and oxidize the indole ring. Beta-mercaptoethanol enhances the enzymatic activity by counteracting the oxidation effects of the S-S linkage between cysteine residues. Functionally, endo-1,4-beta-xylanase involved in the hydrolysis of xylan, a major structural heterogeneous polysaccharide found in plant biomass representing the second most abundant polysaccharide in the biosphere, after cellulose. Is most active on birchwood xylan (defined as 100%), moderate on beechwood xylan (96.8%) and soluble wheat arabinoxylan (84.5%), and weak on insoluble wheat arabinoxylan (19.7%). Hydrolyzes substrates into a mixture of xylobiose and xylotriose, but no xylose. No activity was detected in the presence of barley beta-glucan, carboxymethyl cellulose-sodium (CMC-Na), and Avicel. Acts as an alkali-tolerant xylanase, exhibiting 68.8% of the activity at pH 9.0, and even 31.8% at pH 10.0. The polypeptide is Endo-1,4-beta-xylanase A (Humicola insolens (Soft-rot fungus)).